The chain runs to 594 residues: Zinc finger protein 703 (594 aa).

Residues 1-14 show a composition bias toward polar residues; the sequence is MSDSPAGSNPRTPE. 3 disordered regions span residues 1–37, 100–298, and 345–370; these read MSDS…VPAV, TCSQ…GHVA, and LVGG…LTGA. Ser2 carries the post-translational modification N-acetylserine. Residues 17 to 30 show a composition bias toward gly residues; the sequence is GSGGGSSSGGGGGK. Low complexity-rich tracts occupy residues 134-145, 177-191, and 212-225; these read RSAPGAASAAAA, GSSS…SSSS, and GASV…SSPG. The segment covering 246 to 256 has biased composition (basic and acidic residues); the sequence is ELDKKEQEAKP. Residue Ser257 is modified to Phosphoserine. Positions 345–356 are enriched in gly residues; it reads LVGGQLSGGLGL. Residues 460-488 form a C2H2-type zinc finger; the sequence is HSCNWVAASGPCDKRFATSEELLSHLRTH. Residue Arg584 is modified to Omega-N-methylarginine.

This sequence belongs to the Elbow/Noc family. As to quaternary structure, interacts with DCAF7 and PHB2. Interacts with TLE4; increases transcriptional repression. Expressed in mammary epithelium.

It localises to the nucleus. The protein resides in the cytoplasm. Transcriptional corepressor which does not bind directly to DNA and may regulate transcription through recruitment of histone deacetylases to gene promoters. Regulates cell adhesion, migration and proliferation. May be required for segmental gene expression during hindbrain development. The chain is Zinc finger protein 703 (Znf703) from Mus musculus (Mouse).